The primary structure comprises 129 residues: HTH-type transcriptional regulator DdrOP3 (129 aa).

An HTH cro/C1-type domain is found at 7–61 (LRELRQERGLRLKDIAGAAQISVPYLSDLERGRTNPSLETLQSLASTYGITVHDL). A DNA-binding region (H-T-H motif) is located at residues 18–37 (LKDIAGAAQISVPYLSDLER).

In terms of processing, cleaved between Leu-106 and Arg-107 by the IrrE metalloprotease after exposure to radiation. Cleavage inactivates DdrOP3, leading to derepression of the target genes.

In terms of biological role, repressor specific for genes preceded by a radiation/desiccation response motif (RDRM) site, which is present upstream of several radiation-induced genes. This Deinococcus deserti (strain DSM 17065 / CIP 109153 / LMG 22923 / VCD115) protein is HTH-type transcriptional regulator DdrOP3.